Reading from the N-terminus, the 975-residue chain is Ionotropic receptor 21a (975 aa).

Positions 1–21 (MFKRIVLAVINLVFLIVSTTA) are cleaved as a signal peptide. N-linked (GlcNAc...) asparagine glycosylation is found at Asn-67, Asn-177, and Asn-355. Residues 433–453 (WPVWVAVILIYLLAIFPLAFS) form a helical membrane-spanning segment. N-linked (GlcNAc...) asparagine glycosylation is present at Asn-464. A helical membrane pass occupies residues 505 to 525 (IYWVFTIIITACYTGSIIAFI). Residues Asn-561, Asn-586, and Asn-611 are each glycosylated (N-linked (GlcNAc...) asparagine). A helical membrane pass occupies residues 708–728 (MFLLMLFGYVVALGVLISEWV). Disordered regions lie at residues 757–839 (ATAG…HSLS) and 911–938 (SPHS…RKEM). Polar residues-rich tracts occupy residues 760-777 (GSDN…TNRN) and 788-800 (VENS…NGSA). N-linked (GlcNAc...) asparagine glycosylation is found at Asn-763 and Asn-797.

This sequence belongs to the glutamate-gated ion channel (TC 1.A.10.1) family. In terms of tissue distribution, in both female and male antenna, expressed specifically in 3 sensory neurons of flagellomere 13 segment (at protein level).

Its subcellular location is the cell projection. The protein resides in the cilium membrane. Functionally, integral part of a neural sensory system in the antenna that provides the neural basis for the response to environmental changes in temperature (thermosensation). Specifically, required for thermosensing by the cooling cell. Plays a role in heat seeking and heat-stimulated blood feeding behavior. The polypeptide is Ionotropic receptor 21a (Anopheles gambiae (African malaria mosquito)).